Here is a 430-residue protein sequence, read N- to C-terminus: Glucose-6-phosphate isomerase (430 aa).

E284 serves as the catalytic Proton donor. Active-site residues include H305 and K420.

Belongs to the GPI family.

It is found in the cytoplasm. It carries out the reaction alpha-D-glucose 6-phosphate = beta-D-fructose 6-phosphate. The protein operates within carbohydrate biosynthesis; gluconeogenesis. It participates in carbohydrate degradation; glycolysis; D-glyceraldehyde 3-phosphate and glycerone phosphate from D-glucose: step 2/4. Its function is as follows. Catalyzes the reversible isomerization of glucose-6-phosphate to fructose-6-phosphate. This chain is Glucose-6-phosphate isomerase, found in Mycoplasma pneumoniae (strain ATCC 29342 / M129 / Subtype 1) (Mycoplasmoides pneumoniae).